The chain runs to 101 residues: Urease subunit beta (101 aa).

This sequence belongs to the urease beta subunit family. In terms of assembly, heterotrimer of UreA (gamma), UreB (beta) and UreC (alpha) subunits. Three heterotrimers associate to form the active enzyme.

It localises to the cytoplasm. It catalyses the reaction urea + 2 H2O + H(+) = hydrogencarbonate + 2 NH4(+). The protein operates within nitrogen metabolism; urea degradation; CO(2) and NH(3) from urea (urease route): step 1/1. This Chelativorans sp. (strain BNC1) protein is Urease subunit beta.